The following is a 901-amino-acid chain: Protein translocase subunit SecA (901 aa).

Residues glutamine 87, 105–109, and aspartate 512 contribute to the ATP site; that span reads GEGKT. A disordered region spans residues 859-901; sequence HQDDDSAAAAALAAQTGERKVGRNDPCPCGSGKKYKQCHGRLQ. 4 residues coordinate Zn(2+): cysteine 885, cysteine 887, cysteine 896, and histidine 897. Residues 891–901 show a composition bias toward basic residues; that stretch reads KKYKQCHGRLQ.

This sequence belongs to the SecA family. As to quaternary structure, monomer and homodimer. Part of the essential Sec protein translocation apparatus which comprises SecA, SecYEG and auxiliary proteins SecDF-YajC and YidC. It depends on Zn(2+) as a cofactor.

Its subcellular location is the cell inner membrane. The protein resides in the cytoplasm. It carries out the reaction ATP + H2O + cellular proteinSide 1 = ADP + phosphate + cellular proteinSide 2.. In terms of biological role, part of the Sec protein translocase complex. Interacts with the SecYEG preprotein conducting channel. Has a central role in coupling the hydrolysis of ATP to the transfer of proteins into and across the cell membrane, serving both as a receptor for the preprotein-SecB complex and as an ATP-driven molecular motor driving the stepwise translocation of polypeptide chains across the membrane. In Escherichia coli O6:K15:H31 (strain 536 / UPEC), this protein is Protein translocase subunit SecA.